The primary structure comprises 280 residues: Aquaporin PIP2-7 (280 aa).

N-acetylmethionine is present on M1. At 1 to 38 the chain is on the cytoplasmic side; sequence MSKEVSEEGKTHHGKDYVDPPPAPLLDMGELKSWSFYR. K3 is subject to N6,N6-dimethyllysine. The helical transmembrane segment at 39-59 threads the bilayer; it reads ALIAEFIATLLFLYVTVATVI. Residues 60–69 lie on the Extracellular side of the membrane; that stretch reads GHKKQTGPCD. The chain crosses the membrane as a helical span at residues 70 to 90; it reads GVGLLGIAWAFGGMIFVLVYC. Topologically, residues 91 to 118 are cytoplasmic; that stretch reads TAGISGGHINPAVTFGLFLARKVSLVRA. Residues 100 to 102 carry the NPA 1 motif; sequence NPA. Residues 119–139 form a helical membrane-spanning segment; that stretch reads LGYMIAQCLGAICGVGFVKAF. The Extracellular portion of the chain corresponds to 140 to 160; the sequence is MKTPYNTLGGGANTVADGYSK. Residues 161–181 traverse the membrane as a helical segment; the sequence is GTALGAEIIGTFVLVYTVFSA. Over 182–192 the chain is Cytoplasmic; the sequence is TDPKRSARDSH. A helical membrane pass occupies residues 193–213; sequence IPVLAPLPIGFAVFMVHLATI. The Extracellular portion of the chain corresponds to 214–242; it reads PITGTGINPARSFGAAVIYNNEKAWDDQW. The NPA 2 signature appears at 221–223; sequence NPA. The chain crosses the membrane as a helical span at residues 243-263; the sequence is IFWVGPFLGALAAAAYHQYIL. Residues 264–280 are Cytoplasmic-facing; it reads RASAIKALGSFRSNATN. 2 positions are modified to phosphoserine: S273 and S276. T279 is subject to Phosphothreonine.

The protein belongs to the MIP/aquaporin (TC 1.A.8) family. PIP (TC 1.A.8.11) subfamily. As to quaternary structure, interacts with SYP61 and SYP121 in trafficking vesicles and at the plasma membrane. Highly expressed in flowers, expressed at low levels in siliques, and at low level in leaves and roots. Highly levels in elongating cells in both roots and shoots.

The protein resides in the cell membrane. Functionally, water channel required to facilitate the transport of water across cell membrane. May be involved in the osmoregulation in plants under high osmotic stress such as under a high salt condition. The sequence is that of Aquaporin PIP2-7 from Arabidopsis thaliana (Mouse-ear cress).